The primary structure comprises 503 residues: Activin receptor type-1-like (503 aa).

The signal sequence occupies residues Met-1–Gly-21. At Asp-22–Gln-118 the chain is on the extracellular side. Cystine bridges form between Cys-34/Cys-51, Cys-36/Cys-41, and Cys-46/Cys-69. Positions His-73–Leu-76 are mediates specificity for BMP ligand. Disulfide bonds link Cys-77-Cys-89 and Cys-90-Cys-95. Residue Asn-98 is glycosylated (N-linked (GlcNAc...) asparagine). A helical transmembrane segment spans residues Leu-119–Trp-141. Residues His-142–Gln-503 lie on the Cytoplasmic side of the membrane. 3 positions are modified to phosphoserine: Ser-155, Ser-160, and Ser-161. The GS domain occupies Ser-172–Gln-201. The Protein kinase domain occupies Val-202–Ile-492. ATP is bound by residues Val-208–Val-216 and Lys-229. Asp-330 acts as the Proton acceptor in catalysis.

Belongs to the protein kinase superfamily. TKL Ser/Thr protein kinase family. TGFB receptor subfamily. In terms of assembly, interacts with TSC22D1/TSC-22. Mg(2+) serves as cofactor. Requires Mn(2+) as cofactor.

The protein resides in the cell membrane. It catalyses the reaction L-threonyl-[receptor-protein] + ATP = O-phospho-L-threonyl-[receptor-protein] + ADP + H(+). The enzyme catalyses L-seryl-[receptor-protein] + ATP = O-phospho-L-seryl-[receptor-protein] + ADP + H(+). In terms of biological role, type I receptor for TGF-beta family ligands BMP9/GDF2 and BMP10 and important regulator of normal blood vessel development. On ligand binding, forms a receptor complex consisting of two type II and two type I transmembrane serine/threonine kinases. Type II receptors phosphorylate and activate type I receptors which autophosphorylate, then bind and activate SMAD transcriptional regulators. May bind activin as well. The protein is Activin receptor type-1-like (ACVRL1) of Homo sapiens (Human).